A 33-amino-acid polypeptide reads, in one-letter code: Cytochrome b6-f complex subunit 8 (33 aa).

Residues 2–22 (LFTVAWASLAAMFSFSIAMVV) traverse the membrane as a helical segment.

It belongs to the PetN family. As to quaternary structure, the 4 large subunits of the cytochrome b6-f complex are cytochrome b6, subunit IV (17 kDa polypeptide, PetD), cytochrome f and the Rieske protein, while the 4 small subunits are PetG, PetL, PetM and PetN. The complex functions as a dimer.

The protein localises to the cellular thylakoid membrane. In terms of biological role, component of the cytochrome b6-f complex, which mediates electron transfer between photosystem II (PSII) and photosystem I (PSI), cyclic electron flow around PSI, and state transitions. In Parasynechococcus marenigrum (strain WH8102), this protein is Cytochrome b6-f complex subunit 8.